Reading from the N-terminus, the 465-residue chain is Iron-sulfur cluster assembly SufBD family protein SE_0610 (465 aa).

It belongs to the iron-sulfur cluster assembly SufBD family.

The polypeptide is Iron-sulfur cluster assembly SufBD family protein SE_0610 (Staphylococcus epidermidis (strain ATCC 12228 / FDA PCI 1200)).